Here is a 301-residue protein sequence, read N- to C-terminus: Protoheme IX farnesyltransferase (301 aa).

A run of 9 helical transmembrane segments spans residues 20–42 (FTEL…GMWL), 55–75 (VDVI…SGAF), 105–125 (ALMV…MTTW), 126–146 (QAGV…SLYA), 150–172 (LVSN…WFAV), 176–198 (FSIV…FYAI), 227–247 (MFFW…LGIV), 249–269 (VVLA…GFKM), and 280–300 (FVYS…ISIF).

It belongs to the UbiA prenyltransferase family. Protoheme IX farnesyltransferase subfamily. Interacts with CtaA.

The protein localises to the cell membrane. It catalyses the reaction heme b + (2E,6E)-farnesyl diphosphate + H2O = Fe(II)-heme o + diphosphate. Its pathway is porphyrin-containing compound metabolism; heme O biosynthesis; heme O from protoheme: step 1/1. Its function is as follows. Converts heme B (protoheme IX) to heme O by substitution of the vinyl group on carbon 2 of heme B porphyrin ring with a hydroxyethyl farnesyl side group. The protein is Protoheme IX farnesyltransferase of Listeria monocytogenes serotype 4b (strain CLIP80459).